A 715-amino-acid chain; its full sequence is Polyribonucleotide nucleotidyltransferase (715 aa).

Mg(2+)-binding residues include Asp493 and Asp499. Positions 560–619 (PRMITIKINPEKIRDVIGKGGSVIRALTEETGTTIDISDDGVVTIASTNSDGMAEAKKRI) constitute a KH domain. One can recognise an S1 motif domain in the interval 629–697 (GQVYEGTVLK…EKGRVRLSAK (69 aa)).

The protein belongs to the polyribonucleotide nucleotidyltransferase family. Mg(2+) serves as cofactor.

The protein resides in the cytoplasm. The enzyme catalyses RNA(n+1) + phosphate = RNA(n) + a ribonucleoside 5'-diphosphate. Functionally, involved in mRNA degradation. Catalyzes the phosphorolysis of single-stranded polyribonucleotides processively in the 3'- to 5'-direction. The chain is Polyribonucleotide nucleotidyltransferase from Burkholderia lata (strain ATCC 17760 / DSM 23089 / LMG 22485 / NCIMB 9086 / R18194 / 383).